The sequence spans 1087 residues: Error-prone DNA polymerase 3 (1087 aa).

The tract at residues 1040–1064 is disordered; that stretch reads AGRGDEFAHGSPGSSDTRDKSKPVV.

The protein belongs to the DNA polymerase type-C family. DnaE2 subfamily.

The protein localises to the cytoplasm. It catalyses the reaction DNA(n) + a 2'-deoxyribonucleoside 5'-triphosphate = DNA(n+1) + diphosphate. In terms of biological role, DNA polymerase involved in damage-induced mutagenesis and translesion synthesis (TLS). It is not the major replicative DNA polymerase. In Agrobacterium fabrum (strain C58 / ATCC 33970) (Agrobacterium tumefaciens (strain C58)), this protein is Error-prone DNA polymerase 3.